The sequence spans 500 residues: Maturase K (500 aa).

This sequence belongs to the intron maturase 2 family. MatK subfamily.

It localises to the plastid. The protein localises to the chloroplast. Usually encoded in the trnK tRNA gene intron. Probably assists in splicing its own and other chloroplast group II introns. This is Maturase K from Adiantum capillus-veneris (Maidenhair fern).